Reading from the N-terminus, the 98-residue chain is NADH-ubiquinone oxidoreductase chain 4L (98 aa).

3 helical membrane-spanning segments follow: residues 1–21 (MMPINLNLIMAFSLALIGALV), 28–48 (STLLCLEGMMLSLFIQMALLI), and 59–79 (APLILLVFSACEAGLGLALLV).

Belongs to the complex I subunit 4L family. As to quaternary structure, core subunit of respiratory chain NADH dehydrogenase (Complex I) which is composed of 45 different subunits.

The protein localises to the mitochondrion inner membrane. It carries out the reaction a ubiquinone + NADH + 5 H(+)(in) = a ubiquinol + NAD(+) + 4 H(+)(out). Functionally, core subunit of the mitochondrial membrane respiratory chain NADH dehydrogenase (Complex I) which catalyzes electron transfer from NADH through the respiratory chain, using ubiquinone as an electron acceptor. Part of the enzyme membrane arm which is embedded in the lipid bilayer and involved in proton translocation. This is NADH-ubiquinone oxidoreductase chain 4L (MT-ND4L) from Distoechurus pennatus (Feather-tailed possum).